We begin with the raw amino-acid sequence, 224 residues long: Inner membrane-spanning protein YciB (224 aa).

Transmembrane regions (helical) follow at residues 20-40 (GVNP…FFFA), 61-81 (IFVA…ASWL), 86-106 (LPIM…LTLY), 123-143 (LFGG…GYVF), 156-176 (KLTF…EVVW), and 187-207 (FKVW…MPLI).

It belongs to the YciB family.

It localises to the cell inner membrane. Functionally, plays a role in cell envelope biogenesis, maintenance of cell envelope integrity and membrane homeostasis. The protein is Inner membrane-spanning protein YciB of Mesorhizobium japonicum (strain LMG 29417 / CECT 9101 / MAFF 303099) (Mesorhizobium loti (strain MAFF 303099)).